Consider the following 353-residue polypeptide: Phosphoribosylformylglycinamidine cyclo-ligase (353 aa).

Belongs to the AIR synthase family.

The protein resides in the cytoplasm. The enzyme catalyses 2-formamido-N(1)-(5-O-phospho-beta-D-ribosyl)acetamidine + ATP = 5-amino-1-(5-phospho-beta-D-ribosyl)imidazole + ADP + phosphate + H(+). Its pathway is purine metabolism; IMP biosynthesis via de novo pathway; 5-amino-1-(5-phospho-D-ribosyl)imidazole from N(2)-formyl-N(1)-(5-phospho-D-ribosyl)glycinamide: step 2/2. The chain is Phosphoribosylformylglycinamidine cyclo-ligase from Dinoroseobacter shibae (strain DSM 16493 / NCIMB 14021 / DFL 12).